Here is a 459-residue protein sequence, read N- to C-terminus: Limonoid 7-O-acetyltransferse (459 aa).

Catalysis depends on proton acceptor residues His167 and Asp391.

Belongs to the plant acyltransferase family. As to quaternary structure, monomer. As to expression, expressed in maturing fruits and in juice vesicles.

The enzyme catalyses (1S)-1-acetoxy-luvungin A + acetyl-CoA = (1S)-1,7-diacetoxy-luvungin A + CoA. It participates in secondary metabolite biosynthesis; terpenoid biosynthesis. Its function is as follows. Acetyltransferase involved in the biosynthesis of limonoids triterpene natural products such as limonin, a compound with insecticidal activity responsible for the bitter taste in citrus. Catalyzes the formation of (1S)-1,7-diacetoxy-luvungin A from (1S)-1-acetoxy-luvungin A. This chain is Limonoid 7-O-acetyltransferse, found in Citrus sinensis (Sweet orange).